Consider the following 244-residue polypeptide: Mediator of RNA polymerase II transcription subunit 19 (244 aa).

Disordered stretches follow at residues 1–67 (MENF…PFYL) and 171–244 (PKKK…SSLR). Positions 26 to 38 (GKPPPPPPPPPGG) are enriched in pro residues. Residues 44–55 (PPSTATSAPAGA) show a composition bias toward low complexity. Basic residues predominate over residues 171 to 182 (PKKKNKHKHKQS). Serine 194 carries the post-translational modification Phosphoserine. The segment covering 212-224 (KRKKKEKKKKKNR) has biased composition (basic residues). Serine 226 carries the phosphoserine modification. The segment covering 234 to 244 (SSQASSSSSLR) has biased composition (low complexity).

The protein belongs to the Mediator complex subunit 19 family. Component of the Mediator complex, which is composed of MED1, MED4, MED6, MED7, MED8, MED9, MED10, MED11, MED12, MED13, MED13L, MED14, MED15, MED16, MED17, MED18, MED19, MED20, MED21, MED22, MED23, MED24, MED25, MED26, MED27, MED29, MED30, MED31, CCNC, CDK8 and CDC2L6/CDK11. The MED12, MED13, CCNC and CDK8 subunits form a distinct module termed the CDK8 module. Mediator containing the CDK8 module is less active than Mediator lacking this module in supporting transcriptional activation. Individual preparations of the Mediator complex lacking one or more distinct subunits have been variously termed ARC, CRSP, DRIP, PC2, SMCC and TRAP.

The protein localises to the nucleus. Component of the Mediator complex, a coactivator involved in the regulated transcription of nearly all RNA polymerase II-dependent genes. Mediator functions as a bridge to convey information from gene-specific regulatory proteins to the basal RNA polymerase II transcription machinery. Mediator is recruited to promoters by direct interactions with regulatory proteins and serves as a scaffold for the assembly of a functional preinitiation complex with RNA polymerase II and the general transcription factors. This chain is Mediator of RNA polymerase II transcription subunit 19 (Med19), found in Mus musculus (Mouse).